A 105-amino-acid chain; its full sequence is Large ribosomal subunit protein uL24 (105 aa).

This sequence belongs to the universal ribosomal protein uL24 family. Part of the 50S ribosomal subunit.

Its function is as follows. One of two assembly initiator proteins, it binds directly to the 5'-end of the 23S rRNA, where it nucleates assembly of the 50S subunit. One of the proteins that surrounds the polypeptide exit tunnel on the outside of the subunit. The sequence is that of Large ribosomal subunit protein uL24 from Mycobacterium sp. (strain JLS).